Reading from the N-terminus, the 431-residue chain is NADH-quinone oxidoreductase subunit D 2 (431 aa).

The segment at 1–27 (MNDHKGLGGLDTEATPGSFGAGEPPRA) is disordered.

This sequence belongs to the complex I 49 kDa subunit family. As to quaternary structure, NDH-1 is composed of 14 different subunits. Subunits NuoB, C, D, E, F, and G constitute the peripheral sector of the complex.

The protein localises to the cell inner membrane. It carries out the reaction a quinone + NADH + 5 H(+)(in) = a quinol + NAD(+) + 4 H(+)(out). Its function is as follows. NDH-1 shuttles electrons from NADH, via FMN and iron-sulfur (Fe-S) centers, to quinones in the respiratory chain. The immediate electron acceptor for the enzyme in this species is believed to be ubiquinone. Couples the redox reaction to proton translocation (for every two electrons transferred, four hydrogen ions are translocated across the cytoplasmic membrane), and thus conserves the redox energy in a proton gradient. The chain is NADH-quinone oxidoreductase subunit D 2 from Anaeromyxobacter sp. (strain Fw109-5).